The chain runs to 397 residues: uncharacterized protein (397 aa).

This is an uncharacterized protein from Methanocaldococcus jannaschii (strain ATCC 43067 / DSM 2661 / JAL-1 / JCM 10045 / NBRC 100440) (Methanococcus jannaschii).